The primary structure comprises 55 residues: Large ribosomal subunit protein bL33 (55 aa).

The segment covering 1 to 11 (MAKGGREKIKL) has biased composition (basic and acidic residues). Residues 1-29 (MAKGGREKIKLESSAGTGHFYTTSKNKRT) form a disordered region. Residues 14–24 (SAGTGHFYTTS) are compositionally biased toward polar residues.

The protein belongs to the bacterial ribosomal protein bL33 family.

The protein is Large ribosomal subunit protein bL33 of Polynucleobacter asymbioticus (strain DSM 18221 / CIP 109841 / QLW-P1DMWA-1) (Polynucleobacter necessarius subsp. asymbioticus).